Here is a 417-residue protein sequence, read N- to C-terminus: Multifunctional CCA protein (417 aa).

ATP contacts are provided by Gly-8 and Arg-11. Residues Gly-8 and Arg-11 each coordinate CTP. Positions 21 and 23 each coordinate Mg(2+). ATP contacts are provided by Arg-91, Arg-143, and Arg-146. CTP-binding residues include Arg-91, Arg-143, and Arg-146. The HD domain occupies 232 to 333 (TGVHVMMVVD…VRLFERSDAL (102 aa)).

The protein belongs to the tRNA nucleotidyltransferase/poly(A) polymerase family. Bacterial CCA-adding enzyme type 1 subfamily. In terms of assembly, monomer. Can also form homodimers and oligomers. The cofactor is Mg(2+). Ni(2+) is required as a cofactor.

It catalyses the reaction a tRNA precursor + 2 CTP + ATP = a tRNA with a 3' CCA end + 3 diphosphate. The catalysed reaction is a tRNA with a 3' CCA end + 2 CTP + ATP = a tRNA with a 3' CCACCA end + 3 diphosphate. In terms of biological role, catalyzes the addition and repair of the essential 3'-terminal CCA sequence in tRNAs without using a nucleic acid template. Adds these three nucleotides in the order of C, C, and A to the tRNA nucleotide-73, using CTP and ATP as substrates and producing inorganic pyrophosphate. tRNA 3'-terminal CCA addition is required both for tRNA processing and repair. Also involved in tRNA surveillance by mediating tandem CCA addition to generate a CCACCA at the 3' terminus of unstable tRNAs. While stable tRNAs receive only 3'-terminal CCA, unstable tRNAs are marked with CCACCA and rapidly degraded. This Paraburkholderia phymatum (strain DSM 17167 / CIP 108236 / LMG 21445 / STM815) (Burkholderia phymatum) protein is Multifunctional CCA protein.